Here is a 797-residue protein sequence, read N- to C-terminus: Protocadherin beta-9 (797 aa).

The first 26 residues, 1 to 26, serve as a signal peptide directing secretion; it reads MKTRGFSFPRQRQVLFLFLFWGVSLA. Residues 27–690 are Extracellular-facing; it reads GSGFGRYSVT…AQADSLTVYL (664 aa). 5 Cadherin domains span residues 35–133, 138–242, 247–347, 352–451, and 456–561; these read VTEE…SPVF, MVLK…APQF, YETQ…PPEL, LSNS…APAF, and YTLF…SPFV. N-linked (GlcNAc...) asparagine glycosylation is present at Asn-169. Asn-418 is a glycosylation site (N-linked (GlcNAc...) asparagine). Asn-567 is a glycosylation site (N-linked (GlcNAc...) asparagine). Positions 568 to 671 constitute a Cadherin 6 domain; the sequence is GSAPCTELVP…LVDGFSQPYL (104 aa). The helical transmembrane segment at 691–711 threads the bilayer; it reads VVALASVSSLFLLSVLLFVAV. The Cytoplasmic portion of the chain corresponds to 712-797; that stretch reads RLCRRSRAAS…TLHNSFGFNY (86 aa).

Its subcellular location is the cell membrane. Functionally, potential calcium-dependent cell-adhesion protein. May be involved in the establishment and maintenance of specific neuronal connections in the brain. This chain is Protocadherin beta-9 (PCDHB9), found in Pan troglodytes (Chimpanzee).